The primary structure comprises 224 residues: MSIRSWPAAERPRERLLELGAGSLSDAELLAIFLRTGVAGKSAVDLARHLLNQFDGLRSLLDADLSTFTSQLGLGPAKFAQLQAVMEMARRHMAESLRRDSALENPTQVRNYLKAQLRHEQHEVFACLFLDNKHRVMTFEILFRGTINASYVHPRQVVKRAMAHNAASLILCHNHPSGITTPSRSDIDLTKRLKEALMLVDVHVLDHVIVGDGEPLSMVERGLM.

Residues 102–224 form the MPN domain; the sequence is ALENPTQVRN…PLSMVERGLM (123 aa). Residues His-173, His-175, and Asp-186 each coordinate Zn(2+). Residues 173-186 carry the JAMM motif motif; it reads HNHPSGITTPSRSD.

It belongs to the UPF0758 family.

In Pseudomonas savastanoi pv. phaseolicola (strain 1448A / Race 6) (Pseudomonas syringae pv. phaseolicola (strain 1448A / Race 6)), this protein is UPF0758 protein PSPPH_0210.